Consider the following 359-residue polypeptide: Ribosomal RNA small subunit methyltransferase H (359 aa).

Residues 39–41 (AGH), D58, F87, D108, and Q115 contribute to the S-adenosyl-L-methionine site. The interval 339–359 (IQGSASPGRAKNTARIRTRRG) is disordered. The span at 350 to 359 (NTARIRTRRG) shows a compositional bias: basic residues.

This sequence belongs to the methyltransferase superfamily. RsmH family.

The protein localises to the cytoplasm. It carries out the reaction cytidine(1402) in 16S rRNA + S-adenosyl-L-methionine = N(4)-methylcytidine(1402) in 16S rRNA + S-adenosyl-L-homocysteine + H(+). Its function is as follows. Specifically methylates the N4 position of cytidine in position 1402 (C1402) of 16S rRNA. The sequence is that of Ribosomal RNA small subunit methyltransferase H from Bifidobacterium longum (strain DJO10A).